Here is a 557-residue protein sequence, read N- to C-terminus: Dihydroxy-acid dehydratase (557 aa).

[2Fe-2S] cluster is bound at residue C49. D81 serves as a coordination point for Mg(2+). C122 contacts [2Fe-2S] cluster. D123 and K124 together coordinate Mg(2+). An N6-carboxylysine modification is found at K124. Residue C194 participates in [2Fe-2S] cluster binding. Position 446 (E446) interacts with Mg(2+). S472 functions as the Proton acceptor in the catalytic mechanism.

The protein belongs to the IlvD/Edd family. Homodimer. It depends on [2Fe-2S] cluster as a cofactor. Mg(2+) serves as cofactor.

It catalyses the reaction (2R)-2,3-dihydroxy-3-methylbutanoate = 3-methyl-2-oxobutanoate + H2O. The catalysed reaction is (2R,3R)-2,3-dihydroxy-3-methylpentanoate = (S)-3-methyl-2-oxopentanoate + H2O. The protein operates within amino-acid biosynthesis; L-isoleucine biosynthesis; L-isoleucine from 2-oxobutanoate: step 3/4. It participates in amino-acid biosynthesis; L-valine biosynthesis; L-valine from pyruvate: step 3/4. Functionally, functions in the biosynthesis of branched-chain amino acids. Catalyzes the dehydration of (2R,3R)-2,3-dihydroxy-3-methylpentanoate (2,3-dihydroxy-3-methylvalerate) into 2-oxo-3-methylpentanoate (2-oxo-3-methylvalerate) and of (2R)-2,3-dihydroxy-3-methylbutanoate (2,3-dihydroxyisovalerate) into 2-oxo-3-methylbutanoate (2-oxoisovalerate), the penultimate precursor to L-isoleucine and L-valine, respectively. This chain is Dihydroxy-acid dehydratase, found in Prochlorococcus marinus (strain MIT 9301).